The sequence spans 226 residues: Large ribosomal subunit protein uL1 (226 aa).

This sequence belongs to the universal ribosomal protein uL1 family. In terms of assembly, part of the 50S ribosomal subunit.

Its function is as follows. Binds directly to 23S rRNA. The L1 stalk is quite mobile in the ribosome, and is involved in E site tRNA release. Functionally, protein L1 is also a translational repressor protein, it controls the translation of the L11 operon by binding to its mRNA. This chain is Large ribosomal subunit protein uL1, found in Borrelia garinii subsp. bavariensis (strain ATCC BAA-2496 / DSM 23469 / PBi) (Borreliella bavariensis).